A 291-amino-acid polypeptide reads, in one-letter code: Nucleotide-binding protein RALTA_A0325 (291 aa).

8–15 (GISGSGKS) is an ATP binding site. Residue 57–60 (DIRS) coordinates GTP.

It belongs to the RapZ-like family.

Its function is as follows. Displays ATPase and GTPase activities. The chain is Nucleotide-binding protein RALTA_A0325 from Cupriavidus taiwanensis (strain DSM 17343 / BCRC 17206 / CCUG 44338 / CIP 107171 / LMG 19424 / R1) (Ralstonia taiwanensis (strain LMG 19424)).